We begin with the raw amino-acid sequence, 206 residues long: MAKVKVCGITSVEDALVAAGAGADAVGFVFFERSPRRVGVERAREISGALPGGVLRVGVFVNTPPEEVLRVASLVGLDYAQLHGDEGPEEVRRVREGGLGVIKALRVRDAGSLSEIERYPEADLFLLDAWREGLYGGTGTPFDWELAKRLRGCANIVVSGGLTPENVRAAIERLDPYGVDASSSLEEAPGKKSGELVRRFVSAAKS.

Belongs to the TrpF family.

The catalysed reaction is N-(5-phospho-beta-D-ribosyl)anthranilate = 1-(2-carboxyphenylamino)-1-deoxy-D-ribulose 5-phosphate. It functions in the pathway amino-acid biosynthesis; L-tryptophan biosynthesis; L-tryptophan from chorismate: step 3/5. This chain is N-(5'-phosphoribosyl)anthranilate isomerase, found in Rubrobacter xylanophilus (strain DSM 9941 / JCM 11954 / NBRC 16129 / PRD-1).